The sequence spans 1065 residues: Carbamoyl phosphate synthase large chain (1065 aa).

Residues 1–401 (MPKRTDIETI…AMLKAVRSLE (401 aa)) are carboxyphosphate synthetic domain. Residues Arg129, Arg169, Gly175, Gly176, Lys208, Ile210, Glu215, Gly241, Ile242, His243, Gln284, and Glu298 each coordinate ATP. The ATP-grasp 1 domain maps to 133–327 (RNLMYELGAP…IAKLAAKIAV (195 aa)). Mg(2+) contacts are provided by Gln284, Glu298, and Asn300. 3 residues coordinate Mn(2+): Gln284, Glu298, and Asn300. An oligomerization domain region spans residues 402–546 (TGQVHLELKH…YGTYEEENES (145 aa)). The interval 547–929 (IKSEKPSVVV…ALYKGLVAAG (383 aa)) is carbamoyl phosphate synthetic domain. The 191-residue stretch at 671–861 (EQALRDLNIP…MANIATKAIL (191 aa)) folds into the ATP-grasp 2 domain. 10 residues coordinate ATP: Arg707, Arg746, Leu748, Glu752, Gly777, Val778, His779, Ser780, Gln820, and Glu832. Mg(2+)-binding residues include Gln820, Glu832, and Asn834. Residues Gln820, Glu832, and Asn834 each coordinate Mn(2+). An MGS-like domain is found at 930 to 1065 (MEIRTEGTVL…EEMPKAEVVH (136 aa)). The interval 930–1065 (MEIRTEGTVL…EEMPKAEVVH (136 aa)) is allosteric domain.

It belongs to the CarB family. Composed of two chains; the small (or glutamine) chain promotes the hydrolysis of glutamine to ammonia, which is used by the large (or ammonia) chain to synthesize carbamoyl phosphate. Tetramer of heterodimers (alpha,beta)4. It depends on Mg(2+) as a cofactor. Requires Mn(2+) as cofactor.

It catalyses the reaction hydrogencarbonate + L-glutamine + 2 ATP + H2O = carbamoyl phosphate + L-glutamate + 2 ADP + phosphate + 2 H(+). The catalysed reaction is hydrogencarbonate + NH4(+) + 2 ATP = carbamoyl phosphate + 2 ADP + phosphate + 2 H(+). It participates in amino-acid biosynthesis; L-arginine biosynthesis; carbamoyl phosphate from bicarbonate: step 1/1. Its pathway is pyrimidine metabolism; UMP biosynthesis via de novo pathway; (S)-dihydroorotate from bicarbonate: step 1/3. Large subunit of the glutamine-dependent carbamoyl phosphate synthetase (CPSase). CPSase catalyzes the formation of carbamoyl phosphate from the ammonia moiety of glutamine, carbonate, and phosphate donated by ATP, constituting the first step of 2 biosynthetic pathways, one leading to arginine and/or urea and the other to pyrimidine nucleotides. The large subunit (synthetase) binds the substrates ammonia (free or transferred from glutamine from the small subunit), hydrogencarbonate and ATP and carries out an ATP-coupled ligase reaction, activating hydrogencarbonate by forming carboxy phosphate which reacts with ammonia to form carbamoyl phosphate. This is Carbamoyl phosphate synthase large chain from Lysinibacillus sphaericus (strain C3-41).